A 416-amino-acid chain; its full sequence is Pectin acetylesterase 3 (416 aa).

An N-terminal signal peptide occupies residues 1–25; it reads MKSVLRIAAAIFWLWLFIVLGVIGS. Asn-131 is a glycosylation site (N-linked (GlcNAc...) asparagine). Residues Ser-198 and Asp-294 each act as charge relay system in the active site. Asn-324 carries an N-linked (GlcNAc...) asparagine glycan. The active-site Charge relay system is His-361.

This sequence belongs to the pectinacetylesterase family.

The protein resides in the secreted. It localises to the cell wall. In terms of biological role, hydrolyzes acetyl esters in homogalacturonan regions of pectin. In type I primary cell wall, galacturonic acid residues of pectin can be acetylated at the O-2 and O-3 positions. Decreasing the degree of acetylation of pectin gels in vitro alters their physical properties. The protein is Pectin acetylesterase 3 of Arabidopsis thaliana (Mouse-ear cress).